Reading from the N-terminus, the 380-residue chain is Alkaline protease (380 aa).

Positions 1-27 are cleaved as a signal peptide; the sequence is MKKPLGKIVASTALLISVAFSSSIASA. Residues 28 to 112 constitute a propeptide that is removed on maturation; that stretch reads AEEAKEKYLI…EEDAEVTTMA (85 aa). An Inhibitor I9 domain is found at 34 to 111; sequence KYLIGFNEQE…IEEDAEVTTM (78 aa). Position 113 (Q113) interacts with Ca(2+). The region spanning 116–379 is the Peptidase S8 domain; it reads PWGISRVQAP…SGLVNAEAAT (264 aa). D143 functions as the Charge relay system in the catalytic mechanism. D151 lines the Ca(2+) pocket. The active-site Charge relay system is the H173. Ca(2+)-binding residues include L184, N186, I188, V190, A274, Y276, and A279. S326 (charge relay system) is an active-site residue.

The protein belongs to the peptidase S8 family. Ca(2+) is required as a cofactor.

It is found in the secreted. This Alkalihalobacillus alcalophilus (Bacillus alcalophilus) protein is Alkaline protease.